Consider the following 134-residue polypeptide: Small ribosomal subunit protein eS24A (134 aa).

Ser-2 is subject to N-acetylserine. Residues 100 to 134 (IQKVARQQRKQRKNRGKKVFGTGKRLAKRKSKQQD) form a disordered region. Basic residues-rich tracts occupy residues 105–117 (RQQR…RGKK) and 124–134 (RLAKRKSKQQD).

Belongs to the eukaryotic ribosomal protein eS24 family. As to quaternary structure, component of the small ribosomal subunit (SSU). Mature yeast ribosomes consist of a small (40S) and a large (60S) subunit. The 40S small subunit contains 1 molecule of ribosomal RNA (18S rRNA) and at least 33 different proteins. The large 60S subunit contains 3 rRNA molecules (25S, 5.8S and 5S rRNA) and at least 46 different proteins.

The protein resides in the cytoplasm. Its function is as follows. Component of the ribosome, a large ribonucleoprotein complex responsible for the synthesis of proteins in the cell. The small ribosomal subunit (SSU) binds messenger RNAs (mRNAs) and translates the encoded message by selecting cognate aminoacyl-transfer RNA (tRNA) molecules. The large subunit (LSU) contains the ribosomal catalytic site termed the peptidyl transferase center (PTC), which catalyzes the formation of peptide bonds, thereby polymerizing the amino acids delivered by tRNAs into a polypeptide chain. The nascent polypeptides leave the ribosome through a tunnel in the LSU and interact with protein factors that function in enzymatic processing, targeting, and the membrane insertion of nascent chains at the exit of the ribosomal tunnel. The chain is Small ribosomal subunit protein eS24A (rps2401) from Schizosaccharomyces pombe (strain 972 / ATCC 24843) (Fission yeast).